Consider the following 1598-residue polypeptide: Structural maintenance of chromosomes flexible hinge domain-containing protein GMI1 (1598 aa).

The interval 1191–1218 is disordered; sequence VTSAPTSEREESGYSTPHSKTTPPPESG. 2 coiled-coil regions span residues 1258–1301 and 1565–1595; these read TEDL…ASLE and EEMM…FTAM.

Highly expressed in closed buds and open flowers. Expressed at low levels in roots, stems, cauline leaves and siliques. Expressed in the region of the shoot and floral meristems.

It localises to the nucleus. In terms of biological role, contributes to DNA double-strand break (DSB) repair via somatic homologous recombination. Functions downstream of ATM. The chain is Structural maintenance of chromosomes flexible hinge domain-containing protein GMI1 from Arabidopsis thaliana (Mouse-ear cress).